A 311-amino-acid chain; its full sequence is uncharacterized protein (311 aa).

The protein belongs to the peptidase C1 family.

This is an uncharacterized protein from Acanthamoeba polyphaga mimivirus (APMV).